We begin with the raw amino-acid sequence, 599 residues long: Aspartate--tRNA(Asp/Asn) ligase (599 aa).

Glu172 contacts L-aspartate. The segment at 196–199 (QLFK) is aspartate. L-aspartate is bound at residue Arg218. ATP is bound by residues 218-220 (RDE) and Gln227. Residue His451 participates in L-aspartate binding. Glu485 lines the ATP pocket. Arg492 serves as a coordination point for L-aspartate. Residue 537-540 (GLDR) participates in ATP binding.

It belongs to the class-II aminoacyl-tRNA synthetase family. Type 1 subfamily. Homodimer.

It is found in the cytoplasm. The enzyme catalyses tRNA(Asx) + L-aspartate + ATP = L-aspartyl-tRNA(Asx) + AMP + diphosphate. Functionally, aspartyl-tRNA synthetase with relaxed tRNA specificity since it is able to aspartylate not only its cognate tRNA(Asp) but also tRNA(Asn). Reaction proceeds in two steps: L-aspartate is first activated by ATP to form Asp-AMP and then transferred to the acceptor end of tRNA(Asp/Asn). This Dechloromonas aromatica (strain RCB) protein is Aspartate--tRNA(Asp/Asn) ligase.